The chain runs to 135 residues: Transcriptional activator protein (135 aa).

Positions 17–32 (KVQHKIAKKKPIRRKR) match the Nuclear localization signal motif. A zinc finger lies at 37–54 (CGCSYYLHLNCNNHGFTH). Composition is skewed to polar residues over residues 77–87 (LFQDNRTQPEA) and 101–115 (IQPQ…SQMF). A disordered region spans residues 77 to 117 (LFQDNRTQPEAISNEPRHHFHSDKIQPQHQEGNGDSQMFSR). The interval 120–135 (NLDDITASDWSFLKSI) is transactivation.

Belongs to the geminiviridae transcriptional activator protein family. Monomer. Homodimer. Homooligomer. Self-interaction correlates with nuclear localization and efficient activation of transcription. Monomers suppress local silencing by interacting with and inactivating host adenosine kinase 2 (ADK2) in the cytoplasm. Interacts with and inhibits host SNF1 kinase. Binds to ssDNA. May interact with host RPS27A. In terms of processing, phosphorylated.

It localises to the host nucleus. The protein resides in the host cytoplasm. In terms of biological role, multifunctional protein that modulates host antiviral defenses and promotes host attractiveness to insect vectors. Acts as a suppressor of RNA-mediated gene silencing, also known as post-transcriptional gene silencing (PTGS), a mechanism of plant viral defense that limits the accumulation of viral RNAs. TrAP suppresses the host RNA silencing by inhibiting adenosine kinase 2 (ADK2), a kinase involved in a general methylation pathway. Also suppresses the host basal defense by interacting with and inhibiting SNF1 kinase, a key regulator of cell metabolism implicated in innate antiviral defense. Inhibits signal transduction by the phytohormone jasmonate, making the infected plant more attractive to aphids, which are the second host to play a role as a dissemination vector. Acts by binding to ubiquitin precursor RPS27A, thereby preventing ubiquitin degradation of JAZ. This is Transcriptional activator protein from Tomato yellow leaf curl virus (strain Israel) (TYLCV).